The chain runs to 512 residues: ETS translocation variant 3 (512 aa).

A DNA-binding region (ETS) is located at residues 35 to 116 (IQLWHFILEL…KGKRFTYKFN (82 aa)). Residues 136-222 (VPQSAPPVPT…NAIGGGGIGH (87 aa)) form a disordered region. S139, S159, and S315 each carry phosphoserine. Residues 158–184 (HSPTNDVQPGRFSASSLTASGQESSNG) are compositionally biased toward polar residues. The tract at residues 336 to 512 (PEESTQFSIK…QGLATAAADA (177 aa)) is disordered. Positions 380-406 (IKVEPASEKDPESLRQSAREKEEHTQE) are enriched in basic and acidic residues. K381 is covalently cross-linked (Glycyl lysine isopeptide (Lys-Gly) (interchain with G-Cter in SUMO2)). K388 carries the N6-acetyllysine; alternate modification. K388 is covalently cross-linked (Glycyl lysine isopeptide (Lys-Gly) (interchain with G-Cter in SUMO2); alternate). Residues 443 to 452 (EPLEVTEDIE) show a composition bias toward acidic residues. Basic and acidic residues-rich tracts occupy residues 453–468 (DRPG…KEDA) and 479–491 (RWND…ELSK).

This sequence belongs to the ETS family.

Its subcellular location is the nucleus. Its function is as follows. Transcriptional repressor that contribute to growth arrest during terminal macrophage differentiation by repressing target genes involved in Ras-dependent proliferation. Represses MMP1 promoter activity. The chain is ETS translocation variant 3 (ETV3) from Pan paniscus (Pygmy chimpanzee).